Here is a 418-residue protein sequence, read N- to C-terminus: Tyrosine--tRNA ligase (418 aa).

Tyr-34 contributes to the L-tyrosine binding site. The 'HIGH' region motif lies at 39-48 (PTADSLHLGH). L-tyrosine-binding residues include Tyr-169 and Gln-173. A 'KMSKS' region motif is present at residues 229–233 (KFGKS). Lys-232 is a binding site for ATP. The S4 RNA-binding domain occupies 352 to 418 (HNIVELLVTA…GKKKYFVLTY (67 aa)).

It belongs to the class-I aminoacyl-tRNA synthetase family. TyrS type 1 subfamily. In terms of assembly, homodimer.

The protein localises to the cytoplasm. It catalyses the reaction tRNA(Tyr) + L-tyrosine + ATP = L-tyrosyl-tRNA(Tyr) + AMP + diphosphate + H(+). Functionally, catalyzes the attachment of tyrosine to tRNA(Tyr) in a two-step reaction: tyrosine is first activated by ATP to form Tyr-AMP and then transferred to the acceptor end of tRNA(Tyr). The chain is Tyrosine--tRNA ligase from Streptococcus mutans serotype c (strain ATCC 700610 / UA159).